A 289-amino-acid polypeptide reads, in one-letter code: MYTVKENVSKEAIEEFLQSRKLTLDVPYQFSLGLFENSRLQGVLLYEDSLWESKVLQKKVMNVKLLAANSTGQLKRLFEAFYTVRQMDETDFIFVRVPAEDIGAAHVIQQQPSSYFVGSLLKLAMPPSFYDKTPPFFELGPPEPGDTEAICELARDSFTKSRYFQDPHLSRDAANEIFQEWTRNNLNGRAAVNIVAKHNGEVIGYLQGLSRDDECILDLMAVKPGFEGKRIAFHLLANLIEQPETQKHRTVTAGTQLHNVRAIRLYERMGFTAEQSYYYYHIWPGKEAK.

The 153-residue stretch at Phe137–Lys289 folds into the N-acetyltransferase domain.

The protein operates within spore coat biogenesis; spore coat polysaccharide biosynthesis. The sequence is that of Spore coat polysaccharide biosynthesis protein SpsD (spsD) from Bacillus subtilis (strain 168).